Consider the following 65-residue polypeptide: uncharacterized protein (65 aa).

This is an uncharacterized protein from Pasteurella multocida (strain Pm70).